The sequence spans 232 residues: Somatolactin (232 aa).

The N-terminal stretch at 1 to 16 (MHNWKGVWLCSLFLTF) is a signal peptide. 3 disulfides stabilise this stretch: Cys-31–Cys-41, Cys-91–Cys-206, and Cys-223–Cys-231. Asn-147 carries N-linked (GlcNAc...) asparagine glycosylation.

The protein belongs to the somatotropin/prolactin family. Pituitary gland.

It is found in the secreted. The sequence is that of Somatolactin from Protopterus annectens (African lungfish).